A 232-amino-acid polypeptide reads, in one-letter code: U-scoloptoxin(11)-Sa3a (232 aa).

The first 21 residues, 1 to 21 (MFQFCLLILLLAPGRFFSALG), serve as a signal peptide directing secretion.

It belongs to the scoloptoxin-11 family. Post-translationally, contains 8 disulfide bonds. Expressed by the venom gland.

It is found in the secreted. This chain is U-scoloptoxin(11)-Sa3a, found in Scolopendra alternans (Florida Keys giant centipede).